Here is a 129-residue protein sequence, read N- to C-terminus: Glycine cleavage system H protein (129 aa).

One can recognise a Lipoyl-binding domain in the interval 24–106 (LIRVGISAFA…HGAGWLLVVR (83 aa)). The residue at position 65 (Lys65) is an N6-lipoyllysine.

Belongs to the GcvH family. In terms of assembly, the glycine cleavage system is composed of four proteins: P, T, L and H. Requires (R)-lipoate as cofactor.

In terms of biological role, the glycine cleavage system catalyzes the degradation of glycine. The H protein shuttles the methylamine group of glycine from the P protein to the T protein. This chain is Glycine cleavage system H protein, found in Synechococcus sp. (strain CC9902).